The following is a 675-amino-acid chain: Methionine--tRNA ligase (675 aa).

Residues 15–25 (PYANGSIHLGH) carry the 'HIGH' region motif. Zn(2+) is bound by residues Cys146, Cys149, Cys159, and Cys162. A 'KMSKS' region motif is present at residues 332–336 (KMSKS). Lys335 provides a ligand contact to ATP. The 102-residue stretch at 574 to 675 (DFAKLDLRIA…AGAKPGMRVK (102 aa)) folds into the tRNA-binding domain.

This sequence belongs to the class-I aminoacyl-tRNA synthetase family. MetG type 1 subfamily. As to quaternary structure, homodimer. Zn(2+) serves as cofactor.

It localises to the cytoplasm. The catalysed reaction is tRNA(Met) + L-methionine + ATP = L-methionyl-tRNA(Met) + AMP + diphosphate. In terms of biological role, is required not only for elongation of protein synthesis but also for the initiation of all mRNA translation through initiator tRNA(fMet) aminoacylation. This chain is Methionine--tRNA ligase, found in Tolumonas auensis (strain DSM 9187 / NBRC 110442 / TA 4).